The following is a 102-amino-acid chain: Aspartyl/glutamyl-tRNA(Asn/Gln) amidotransferase subunit C (102 aa).

It belongs to the GatC family. In terms of assembly, heterotrimer of A, B and C subunits.

It catalyses the reaction L-glutamyl-tRNA(Gln) + L-glutamine + ATP + H2O = L-glutaminyl-tRNA(Gln) + L-glutamate + ADP + phosphate + H(+). It carries out the reaction L-aspartyl-tRNA(Asn) + L-glutamine + ATP + H2O = L-asparaginyl-tRNA(Asn) + L-glutamate + ADP + phosphate + 2 H(+). Functionally, allows the formation of correctly charged Asn-tRNA(Asn) or Gln-tRNA(Gln) through the transamidation of misacylated Asp-tRNA(Asn) or Glu-tRNA(Gln) in organisms which lack either or both of asparaginyl-tRNA or glutaminyl-tRNA synthetases. The reaction takes place in the presence of glutamine and ATP through an activated phospho-Asp-tRNA(Asn) or phospho-Glu-tRNA(Gln). This chain is Aspartyl/glutamyl-tRNA(Asn/Gln) amidotransferase subunit C, found in Bordetella parapertussis (strain 12822 / ATCC BAA-587 / NCTC 13253).